The sequence spans 538 residues: MKAFPVICLGFAIFSSSICVNINILQQIGYIKQQVRQLSYYSQSSSSYVVVKLLPNIQPTDNSCEFKSVTQYNKTLSNLLLPIAENINNITSPSPGSRRHKRFAGIAIGIAALGVATAAQVTAAVSLVQAQTNARAIAAMKNSIQATNRAVFEVKEGTQQLAIAVQAIQDHINTIMNTQLNNMSCQILDNQLATSLGLYLTELTTVFQPQLINPALSPISIQALRSLLGSMTPAVVQATLSTSISAAEILSAGLMEGQIVSVLLDEMQMIVKINVPTIVTQSNALVIDFYSISSFINNQESIIQLPDRILEIGNEQWRYPAKNCKLTRHHIFCQYNEAERLSLETKLCLAGNISACVFSSIAGSYMRRFVALDGTIVANCRSLTCLCKSPSYPIYQPDHHAVTTIDLTSCQTLSLDGLDFSIVSLSNITYAENLTISLSQTINTQPIDISTELSKVNASLQNAVKYIKESNHQLQSVSVSSKIGAIIVAALVLSILSIIISLLFCFWAYIATKEIRRINFKTNHINTISSSVDDLIRY.

The N-terminal stretch at 1 to 19 is a signal peptide; sequence MKAFPVICLGFAIFSSSIC. Over 20-486 the chain is Extracellular; sequence VNINILQQIG…VSVSSKIGAI (467 aa). Asparagine 56, asparagine 73, and asparagine 89 each carry an N-linked (GlcNAc...) asparagine; by host glycan. The interval 103 to 127 is fusion peptide; the sequence is FAGIAIGIAALGVATAAQVTAAVSL. Residues 128 to 156 adopt a coiled-coil conformation; it reads VQAQTNARAIAAMKNSIQATNRAVFEVKE. The N-linked (GlcNAc...) asparagine; by host glycan is linked to asparagine 182. 4 disulfide bridges follow: cysteine 324–cysteine 333, cysteine 348–cysteine 356, cysteine 380–cysteine 385, and cysteine 387–cysteine 410. N-linked (GlcNAc...) asparagine; by host glycosylation is present at asparagine 352. N-linked (GlcNAc...) asparagine; by host glycans are attached at residues asparagine 427, asparagine 433, and asparagine 457. Positions 452–477 form a coiled coil; it reads ELSKVNASLQNAVKYIKESNHQLQSV. The helical transmembrane segment at 487-507 threads the bilayer; sequence IVAALVLSILSIIISLLFCFW. Topologically, residues 508-538 are cytoplasmic; it reads AYIATKEIRRINFKTNHINTISSSVDDLIRY.

This sequence belongs to the paramyxoviruses fusion glycoprotein family. As to quaternary structure, homotrimer; disulfide-linked F1-F2. Interacts with host LAMP1; LAMP2 and LAMP3; these interactions promote the cleavage of the viral fusion protein F. The inactive precursor F0 is glycosylated and proteolytically cleaved into F1 and F2 to be functionally active. The cleavage is mediated by cellular proteases including host FURIN during the transport and maturation of the polypeptide.

The protein resides in the virion membrane. Its subcellular location is the host cell membrane. Class I viral fusion protein. Under the current model, the protein has at least 3 conformational states: pre-fusion native state, pre-hairpin intermediate state, and post-fusion hairpin state. During viral and plasma cell membrane fusion, the heptad repeat (HR) regions assume a trimer-of-hairpins structure, positioning the fusion peptide in close proximity to the C-terminal region of the ectodomain. The formation of this structure appears to drive apposition and subsequent fusion of viral and plasma cell membranes. Directs fusion of viral and cellular membranes leading to delivery of the nucleocapsid into the cytoplasm. This fusion is pH independent and occurs directly at the outer cell membrane. The trimer of F1-F2 (F protein) probably interacts with HN at the virion surface. Upon HN binding to its cellular receptor, the hydrophobic fusion peptide is unmasked and interacts with the cellular membrane, inducing the fusion between cell and virion membranes. Later in infection, F proteins expressed at the plasma membrane of infected cells could mediate fusion with adjacent cells to form syncytia, a cytopathic effect that could lead to tissue necrosis. The protein is Fusion glycoprotein F0 (F) of Homo sapiens (Human).